The sequence spans 273 residues: 4-hydroxy-tetrahydrodipicolinate reductase (273 aa).

Residues 12–17 (GAGGRM) and glutamate 38 contribute to the NAD(+) site. NADP(+) is bound at residue arginine 39. Residues 102-104 (GTT) and 126-129 (AANF) each bind NAD(+). Histidine 159 (proton donor/acceptor) is an active-site residue. Residue histidine 160 participates in (S)-2,3,4,5-tetrahydrodipicolinate binding. The Proton donor role is filled by lysine 163. 169–170 (GT) provides a ligand contact to (S)-2,3,4,5-tetrahydrodipicolinate.

This sequence belongs to the DapB family. As to quaternary structure, homotetramer.

It localises to the cytoplasm. It catalyses the reaction (S)-2,3,4,5-tetrahydrodipicolinate + NAD(+) + H2O = (2S,4S)-4-hydroxy-2,3,4,5-tetrahydrodipicolinate + NADH + H(+). It carries out the reaction (S)-2,3,4,5-tetrahydrodipicolinate + NADP(+) + H2O = (2S,4S)-4-hydroxy-2,3,4,5-tetrahydrodipicolinate + NADPH + H(+). The protein operates within amino-acid biosynthesis; L-lysine biosynthesis via DAP pathway; (S)-tetrahydrodipicolinate from L-aspartate: step 4/4. Functionally, catalyzes the conversion of 4-hydroxy-tetrahydrodipicolinate (HTPA) to tetrahydrodipicolinate. The sequence is that of 4-hydroxy-tetrahydrodipicolinate reductase from Salmonella choleraesuis (strain SC-B67).